Here is a 311-residue protein sequence, read N- to C-terminus: tRNA-cytidine(32) 2-sulfurtransferase (311 aa).

Residues 47-52 (SGGKDS) carry the PP-loop motif motif. [4Fe-4S] cluster-binding residues include cysteine 122, cysteine 125, and cysteine 213.

The protein belongs to the TtcA family. In terms of assembly, homodimer. Mg(2+) serves as cofactor. Requires [4Fe-4S] cluster as cofactor.

Its subcellular location is the cytoplasm. The catalysed reaction is cytidine(32) in tRNA + S-sulfanyl-L-cysteinyl-[cysteine desulfurase] + AH2 + ATP = 2-thiocytidine(32) in tRNA + L-cysteinyl-[cysteine desulfurase] + A + AMP + diphosphate + H(+). It functions in the pathway tRNA modification. In terms of biological role, catalyzes the ATP-dependent 2-thiolation of cytidine in position 32 of tRNA, to form 2-thiocytidine (s(2)C32). The sulfur atoms are provided by the cysteine/cysteine desulfurase (IscS) system. This is tRNA-cytidine(32) 2-sulfurtransferase from Escherichia coli (strain SMS-3-5 / SECEC).